The following is a 356-amino-acid chain: Guanine nucleotide-binding protein alpha-17 subunit (356 aa).

Gly2 carries the N-myristoyl glycine lipid modification. Residue Cys4 is the site of S-palmitoyl cysteine attachment. A G-alpha domain is found at 32 to 356; it reads SIVKLLLLGA…QKNLQKAGMM (325 aa). The tract at residues 35-48 is G1 motif; that stretch reads KLLLLGAGECGKST. Residues 40 to 47, 177 to 183, 202 to 206, 271 to 274, and Ala328 contribute to the GTP site; these read GAGECGKS, LYSRVAT, DVGGQ, and NKKD. Residues Ser47 and Thr183 each contribute to the Mg(2+) site. A G2 motif region spans residues 175–183; sequence DILYSRVAT. Residues 198–207 are G3 motif; that stretch reads FRVFDVGGQR. The G4 motif stretch occupies residues 267–274; sequence ILFMNKKD. Positions 326 to 331 are G5 motif; it reads TCATDT.

It belongs to the G-alpha family. As to quaternary structure, g proteins are composed of 3 units; alpha, beta and gamma. The alpha chain contains the guanine nucleotide binding site. In terms of tissue distribution, expressed in sensory neurons in the head and tail. Expressed in amphid AWC neurons, to a lesser extent in AWB and weakly in AWA, ASH and ADF neurons (head sensory neurons). Expressed in phasmid PHA and PHB neurons (tail sensory neurons).

It is found in the cell projection. The protein localises to the cilium. It localises to the dendrite. Its function is as follows. Guanine nucleotide-binding proteins (G proteins) are involved as modulators or transducers in various transmembrane signaling systems. This specific G-alpha subunit plays an important role in olfaction and in cilia morphogenesis. Involved in chemotactic responses to attractants diacetyl, pyrazine, 2,4,5-trimethylthiazole, benzaldehyde, isoamyl alcohol, butanone and 2,3-pentanedione. Displays a redundant function with gpa-3 in chemotactic responses. Plays a role in the avoidance response to the noxious chemical quinine in ASH sensory neurons. Involved in avoidance responses to copper, sodium dodecyl sulfate and linoleic acid. Involved in osmotic avoidance and mechanosensory responses. Involved in specifying fan-like morphology of cilia of head sensory neurons AWC. Plays a role in the detection of preferred food sources by mediating the recognition of food odors in olfactory sensory neurons. This chain is Guanine nucleotide-binding protein alpha-17 subunit, found in Caenorhabditis elegans.